A 1110-amino-acid chain; its full sequence is Retinal guanylyl cyclase 1 (1110 aa).

An N-terminal signal peptide occupies residues 1–56 (MTACTFLAGGLRDPGLCGPTRWAPSPPGLPPIPPRPRLRLRPPLLLLLLLPRSVLS). At 57 to 467 (AVFTVGVLGP…PDTICNGGVE (411 aa)) the chain is on the extracellular side. An N-linked (GlcNAc...) asparagine glycan is attached at asparagine 302. The chain crosses the membrane as a helical span at residues 468 to 492 (PSVVFIGFLLVVGMGLAGAFLAHYC). A Protein kinase domain is found at 493–813 (RHRLLHIQMV…DRTFELFKSI (321 aa)). The Cytoplasmic segment spans residues 493 to 1110 (RHRLLHIQMV…KARPGQFSGK (618 aa)). One can recognise a Guanylate cyclase domain in the interval 885-1015 (TLYFSDIVGF…DTVNTASAME (131 aa)). Positions 1070-1110 (PIPKPPDLQPGASNHGISLHEIPPDRRQKLEKARPGQFSGK) are disordered. Residues 1091–1103 (IPPDRRQKLEKAR) show a composition bias toward basic and acidic residues.

Belongs to the adenylyl cyclase class-4/guanylyl cyclase family. As to quaternary structure, homodimer; requires homodimerization for guanylyl cyclase activity. Interacts (via C-terminus) with RD3 (via C-terminus); promotes the exit of GUCY2D from the endoplasmic reticulum and its trafficking to the photoreceptor outer segments. Interaction with RD3 negatively regulates GUCY2D guanylate cyclase activity. In terms of tissue distribution, expressed in the retina in rod outer segment.

The protein localises to the photoreceptor outer segment membrane. It is found in the endoplasmic reticulum membrane. It catalyses the reaction GTP = 3',5'-cyclic GMP + diphosphate. With respect to regulation, activated by GUCA1A when free calcium ions concentration is low, and inhibited by GUCA1A when free calcium ions concentration is high. Negatively regulated by RD3; inhibits the basal and GUCA1A-stimulated guanylate cyclase activity. Its function is as follows. Catalyzes the synthesis of cyclic GMP (cGMP) in rods and cones of photoreceptors. Plays an essential role in phototransduction, by mediating cGMP replenishment. May also participate in the trafficking of membrane-asociated proteins to the photoreceptor outer segment membrane. The protein is Retinal guanylyl cyclase 1 (GUCY2D) of Bos taurus (Bovine).